A 497-amino-acid polypeptide reads, in one-letter code: Probable pyruvate kinase, cytosolic isozyme (497 aa).

Arg37 lines the substrate pocket. Residues Asn39, Ser41, Asp71, and Thr72 each coordinate K(+). 39–42 (NFSH) contributes to the ATP binding site. ATP contacts are provided by Arg78 and Lys163. Substrate is bound at residue Lys227. Glu229 is a Mg(2+) binding site. Substrate contacts are provided by Gly252, Asp253, and Thr285. Asp253 contacts Mg(2+).

The protein belongs to the pyruvate kinase family. In terms of assembly, homotetramer. Mg(2+) serves as cofactor. Requires K(+) as cofactor.

The protein resides in the cytoplasm. It localises to the cytosol. The catalysed reaction is pyruvate + ATP = phosphoenolpyruvate + ADP + H(+). Its pathway is carbohydrate degradation; glycolysis; pyruvate from D-glyceraldehyde 3-phosphate: step 5/5. In terms of biological role, key regulatory enzyme of the glycolytic pathway that catalyzes the final step of glycolysis, converting ADP and phosphoenolpyruvate (PEP) to ATP and pyruvate by essentially irreversible transphosphorylation. This chain is Probable pyruvate kinase, cytosolic isozyme, found in Arabidopsis thaliana (Mouse-ear cress).